The primary structure comprises 1021 residues: MGKGVGRDKYEPAAVSEHGDKKKAKKERDMDELKKEVSMDDHKLSLDELHRKYGTDLNRGLTTARAAEILARDGPNALTPPPTTPEWVKFCRQLFGGFSMLLWIGAVLCFLAYGIQAATEEEPQNDNLYLGVVLSAVVIITGCFSYYQEAKSSKIMESFKNMVPQQALVIRNGEKMSINAEEVVVGDLVEVKGGDRIPADLRIISANGCKVDNSSLTGESEPQTRSPDFTNENPLETRNIAFFSTNCVEGTARGIVVYTGDRTVMGRIATLASGLEGGQTPIAAEIEHFIHIITGVAVFLGVSFFILSLILEYTWLEAVIFLIGIIVANVPEGLLATVTVCLTLTAKRMARKNCLVKNLEAVETLGSTSTICSDKTGTLTQNRMTVAHMWFDNQIHEADTTENQSGVSFDKTSATWLALSRIAGLCNRAVFQANQDNLPILKRAVAGDASESALLKCIEVCCGSVKEMRERYAKIVEIPFNSTNKYQLSIHKNANAGEPRHLLVMKGAPERILDRCSSILIHGKEQPLDEELKDAFQNAYLELGGLGERVLGFCHLMLPDEQFPEGFQFDTDDVNFPVDNLCFVGLISMIDPPRAAVPDAVGKCRSAGIKVIMVTGDHPITAKAIAKGVGIISEGNETVEDIAARLNIPVSQVNPRDARACVVHGSDLKDMTPEQLDDILKYHTEIVFARTSPQQKLIIVEGCQRQGAIVAVTGDGVNDSPALKKADIGVAMGIAGSDVSKQAADMILLDDNFASIVTGVEEGRLIFDNLKKSIAYTLTSNIPEITPFLIFIIANIPLPLGTVTILCIDLGTDMVPAISLAYEQAESDIMKRQPRNPQTDKLVNERLISMAYGQIGMIQALGGFFTYFVIMAENGFLPNHLLGIRVTWDDRWINDVEDSYGQQWTYEQRKIVEFTCHTAFFVSIVVVQWADLVICKTRRNSVFQQGMKNKILIFGLFEETALAAFLSYCPGMGVALRMYPLKPTWWFCAFPYSLLIFVYDEVRKLIIRRRPGGWVEKETYY.

The propeptide occupies 1–5 (MGKGV). Residues 1–11 (MGKGVGRDKYE) show a composition bias toward basic and acidic residues. The tract at residues 1–36 (MGKGVGRDKYEPAAVSEHGDKKKAKKERDMDELKKE) is disordered. Topologically, residues 6–85 (GRDKYEPAAV…NALTPPPTTP (80 aa)) are cytoplasmic. Lys9 carries the post-translational modification N6-acetyllysine. Tyr10 carries the post-translational modification Phosphotyrosine. Ser16 is modified (phosphoserine; by PKC). N6-acetyllysine is present on Lys21. Residues 26–36 (KERDMDELKKE) show a composition bias toward basic and acidic residues. Residues Ser38 and Ser45 each carry the phosphoserine modification. The interval 80-82 (PPP) is phosphoinositide-3 kinase binding. A helical transmembrane segment spans residues 86–106 (EWVKFCRQLFGGFSMLLWIGA). Over 107 to 129 (VLCFLAYGIQAATEEEPQNDNLY) the chain is Extracellular. Residues 130–150 (LGVVLSAVVIITGCFSYYQEA) form a helical membrane-spanning segment. Residues 151–286 (KSSKIMESFK…GGQTPIAAEI (136 aa)) lie on the Cytoplasmic side of the membrane. Ser226 carries the phosphoserine modification. Tyr258 carries the post-translational modification Phosphotyrosine. Residues 287-306 (EHFIHIITGVAVFLGVSFFI) form a helical membrane-spanning segment. Residues 307-318 (LSLILEYTWLEA) are Extracellular-facing. A helical membrane pass occupies residues 319–336 (VIFLIGIIVANVPEGLLA). The Cytoplasmic segment spans residues 337-770 (TVTVCLTLTA…EEGRLIFDNL (434 aa)). Asp374 (4-aspartylphosphate intermediate) is an active-site residue. Phosphoserine occurs at positions 450 and 482. Lys485 lines the ATP pocket. Tyr540 carries the phosphotyrosine modification. Residues 594 to 715 (RAAVPDAVGK…QGAIVAVTGD (122 aa)) form a mediates interaction with SCN7A region. A Phosphoserine modification is found at Ser666. The Mg(2+) site is built by Asp715 and Asp719. A helical membrane pass occupies residues 771–790 (KKSIAYTLTSNIPEITPFLI). Over 791–800 (FIIANIPLPL) the chain is Extracellular. Residues 801–821 (GTVTILCIDLGTDMVPAISLA) form a helical membrane-spanning segment. Topologically, residues 822-841 (YEQAESDIMKRQPRNPQTDK) are cytoplasmic. The helical transmembrane segment at 842–864 (LVNERLISMAYGQIGMIQALGGF) threads the bilayer. Residues 865-916 (FTYFVIMAENGFLPNHLLGIRVTWDDRWINDVEDSYGQQWTYEQRKIVEFTC) lie on the Extracellular side of the membrane. A helical transmembrane segment spans residues 917-936 (HTAFFVSIVVVQWADLVICK). The Cytoplasmic portion of the chain corresponds to 937-949 (TRRNSVFQQGMKN). Ser941 is subject to Phosphoserine; by PKA. Residues 950–968 (KILIFGLFEETALAAFLSY) traverse the membrane as a helical segment. At 969–983 (CPGMGVALRMYPLKP) the chain is on the extracellular side. Residues 984 to 1004 (TWWFCAFPYSLLIFVYDEVRK) traverse the membrane as a helical segment. Residues 1005-1021 (LIIRRRPGGWVEKETYY) are Cytoplasmic-facing.

Belongs to the cation transport ATPase (P-type) (TC 3.A.3) family. Type IIC subfamily. As to quaternary structure, the sodium/potassium-transporting ATPase is composed of a catalytic alpha subunit, an auxiliary non-catalytic beta subunit and an additional regulatory subunit. Interacts with regulatory subunit FXYD1. Interacts with regulatory subunit FXYD3. Interacts with SIK1. Interacts with SLC35G1 and STIM1. Interacts with CLN3; this interaction regulates the sodium/potassium-transporting ATPase complex localization at the plasma membrane. Interacts with SCN7A; activates ATP1A1 P-type sodium:potassium-exchanging transporter activity which indirectly signals to nearby neurons to regulate sodium homeostasis. Post-translationally, phosphorylation on Tyr-10 modulates pumping activity. Phosphorylation of Ser-941 by PKA modulates the response of ATP1A1 to PKC. Dephosphorylation by protein phosphatase 2A (PP2A) following increases in intracellular sodium, leading to increase catalytic activity.

The protein resides in the cell membrane. It localises to the basolateral cell membrane. It is found in the sarcolemma. The protein localises to the cell projection. Its subcellular location is the axon. The protein resides in the melanosome. The catalysed reaction is K(+)(out) + Na(+)(in) + ATP + H2O = K(+)(in) + Na(+)(out) + ADP + phosphate + H(+). With respect to regulation, specifically inhibited by cardiac glycosides such as digoxin or ouabain. In terms of biological role, this is the catalytic component of the active enzyme, which catalyzes the hydrolysis of ATP coupled with the exchange of sodium and potassium ions across the plasma membrane. This action creates the electrochemical gradient of sodium and potassium ions, providing the energy for active transport of various nutrients. Could also be part of an osmosensory signaling pathway that senses body-fluid sodium levels and controls salt intake behavior as well as voluntary water intake to regulate sodium homeostasis. In Ovis aries (Sheep), this protein is Sodium/potassium-transporting ATPase subunit alpha-1 (ATP1A1).